We begin with the raw amino-acid sequence, 388 residues long: Acyl-[acyl-carrier-protein] dehydrogenase MbtN (388 aa).

It belongs to the acyl-CoA dehydrogenase family. Requires FAD as cofactor.

It functions in the pathway siderophore biosynthesis; mycobactin biosynthesis. Functionally, catalyzes the dehydrogenation at the alpha-beta position of ACP-bound acyl chains. This results in the introduction of a double bond in the lipidic chain, which is further transferred to the epsilon-amino group of lysine residue in the mycobactin core by MbtK. This is Acyl-[acyl-carrier-protein] dehydrogenase MbtN (mbtN) from Mycolicibacterium paratuberculosis (strain ATCC BAA-968 / K-10) (Mycobacterium paratuberculosis).